The primary structure comprises 88 residues: Small ribosomal subunit protein bS20 (88 aa).

Residues Met1–Met27 form a disordered region.

The protein belongs to the bacterial ribosomal protein bS20 family.

In terms of biological role, binds directly to 16S ribosomal RNA. This is Small ribosomal subunit protein bS20 from Shewanella loihica (strain ATCC BAA-1088 / PV-4).